Consider the following 274-residue polypeptide: uncharacterized protein (274 aa).

This is an uncharacterized protein from Mycobacterium tuberculosis (strain ATCC 25618 / H37Rv).